Reading from the N-terminus, the 310-residue chain is Receptor homology region, transmembrane domain- and RING domain-containing protein 1 (310 aa).

Positions 1–25 are cleaved as a signal peptide; sequence MRLVVSSCLLVAAPFLSSLLRVSLA. The Lumenal segment spans residues 26 to 168; the sequence is TVVLNSISAS…NPPDRGSAWT (143 aa). An intrachain disulfide couples Cys65 to Cys92. N-linked (GlcNAc...) asparagine glycosylation is present at Asn75. The region spanning 81 to 149 is the PA domain; the sequence is TTKFALIIRG…VAGEILRKYA (69 aa). A helical membrane pass occupies residues 169 to 189; it reads VLAISFFSLLLIVTFLLIAFF. The Cytoplasmic segment spans residues 190–310; sequence APRHWTQWRG…FAFAQSSQSR (121 aa). An RING-type; atypical zinc finger spans residues 232 to 274; the sequence is CAICLEDYRFGESLRLLPCQHAFHLNCIDSWLTKWGTSCPVCK. Residues 284 to 293 show a composition bias toward basic and acidic residues; sequence SEVHKRESPR. The disordered stretch occupies residues 284 to 310; it reads SEVHKRESPRTDTSTSRFAFAQSSQSR. The segment covering 294 to 310 has biased composition (polar residues); that stretch reads TDTSTSRFAFAQSSQSR.

Expressed in leaves, stems, flowers and siliques.

Its subcellular location is the prevacuolar compartment membrane. The protein resides in the protein storage vacuole membrane. It is found in the golgi apparatus membrane. Functionally, involved in the trafficking of vacuolar proteins. Functions probably as a sorting receptor for protein trafficking to the protein storage vacuole (PSV) by binding the C-terminal vacuolar sorting determinant (VSD) of vacuolar-sorted proteins. The protein is Receptor homology region, transmembrane domain- and RING domain-containing protein 1 (RMR1) of Arabidopsis thaliana (Mouse-ear cress).